Here is a 551-residue protein sequence, read N- to C-terminus: MRSTPHWKEAVVYQVYPRSFMDSNGDGTGDLNGIISKLDYLQQLGITLLWLSPVYRSPMDDNGYDISDYEEIADIFGSMSDMERLIAEAKARDIGILMDLVVNHTSDEHPWFIDALSSKNSAYRDFYIWRAPAADGGPPDDSRSNFGGSAWTLDEASGEYYLHQFSTRQPDLNWENPRVREAIHAMMNRWLDKGIGGFRMDVIDLIGKEVDPQIMANGRHPHLYLQQMNRATFGPRGSVTVGETWSATPEDALLYSAEERQERQELTMVFQFEHIKLFWDEQYGKWCNQPFDLLRFKAVIDKWQTALADHGWNSLFWSNHDLPRAVSKFGDDGEYRVVSAKMLATALHCLKGTPYIYQGEEIGMTNVNFADIDDYRDIESLNLYQERIAEGMSHEAMMRGIHANGPDNARTPMQWTAVHMPGLPPVSPGLRLILTSGQWNVAAALDDPDSVFYHYQKLVALRKQLPLLVHGDFRQIVVEHPQVFAWLRTLGEQTLVVINNFTRDAVMLAIPDNLQSQQGRCLINNYAPREQLEPIMELQPYESFALLIERL.

Catalysis depends on aspartate 201, which acts as the Nucleophile. Residue glutamate 243 is the Proton donor of the active site.

It belongs to the glycosyl hydrolase 13 family.

The catalysed reaction is 6-O-alpha-D-glucopyranosyl-D-fructose + H2O = alpha-D-glucose + D-fructose. The protein operates within glycan degradation; palatinose degradation. Its function is as follows. Catalyzes the hydrolysis of palatinose. Shows a strict specificity toward palatinose, and cannot release glucose from the disaccharides sucrose, maltose, trehalose and melibiose. Involved in the degradation of palatinose, a sucrose isomer that is formed as a reserve material under conditions of excess carbon availability, sequestered in a form unavailable to competitors such as fungi or the host plant, and whose consumption appears to be postponed until the preferentially metabolized carbon source (e.g. sucrose) is depleted. This chain is Palatinase, found in Erwinia rhapontici (Pectobacterium rhapontici).